The sequence spans 223 residues: Thiamine-phosphate synthase (223 aa).

4-amino-2-methyl-5-(diphosphooxymethyl)pyrimidine-binding positions include 45-49 (QYREK) and N77. Mg(2+) is bound by residues D78 and D97. T116 is a binding site for 4-amino-2-methyl-5-(diphosphooxymethyl)pyrimidine. 142–144 (SYT) serves as a coordination point for 2-[(2R,5Z)-2-carboxy-4-methylthiazol-5(2H)-ylidene]ethyl phosphate. K145 provides a ligand contact to 4-amino-2-methyl-5-(diphosphooxymethyl)pyrimidine. Residues G173 and 193-194 (VT) each bind 2-[(2R,5Z)-2-carboxy-4-methylthiazol-5(2H)-ylidene]ethyl phosphate.

This sequence belongs to the thiamine-phosphate synthase family. It depends on Mg(2+) as a cofactor.

The enzyme catalyses 2-[(2R,5Z)-2-carboxy-4-methylthiazol-5(2H)-ylidene]ethyl phosphate + 4-amino-2-methyl-5-(diphosphooxymethyl)pyrimidine + 2 H(+) = thiamine phosphate + CO2 + diphosphate. It carries out the reaction 2-(2-carboxy-4-methylthiazol-5-yl)ethyl phosphate + 4-amino-2-methyl-5-(diphosphooxymethyl)pyrimidine + 2 H(+) = thiamine phosphate + CO2 + diphosphate. It catalyses the reaction 4-methyl-5-(2-phosphooxyethyl)-thiazole + 4-amino-2-methyl-5-(diphosphooxymethyl)pyrimidine + H(+) = thiamine phosphate + diphosphate. It participates in cofactor biosynthesis; thiamine diphosphate biosynthesis; thiamine phosphate from 4-amino-2-methyl-5-diphosphomethylpyrimidine and 4-methyl-5-(2-phosphoethyl)-thiazole: step 1/1. Functionally, condenses 4-methyl-5-(beta-hydroxyethyl)thiazole monophosphate (THZ-P) and 2-methyl-4-amino-5-hydroxymethyl pyrimidine pyrophosphate (HMP-PP) to form thiamine monophosphate (TMP). This is Thiamine-phosphate synthase from Dictyoglomus turgidum (strain DSM 6724 / Z-1310).